The following is a 92-amino-acid chain: Cell division protein FtsB (92 aa).

Topologically, residues 1-3 (MRL) are cytoplasmic. Residues 4-21 (FVFFMLCLLVLLQYHLWF) form a helical membrane-spanning segment. Residues 22–92 (GKNGLGDRHN…TFFRIVPKED (71 aa)) are Periplasmic-facing. Residues 28–62 (DRHNLQEEVTLILENNSELRQRNQMMFSEIKDLKE) are a coiled coil.

It belongs to the FtsB family. In terms of assembly, part of a complex composed of FtsB, FtsL and FtsQ.

The protein localises to the cell inner membrane. Essential cell division protein. May link together the upstream cell division proteins, which are predominantly cytoplasmic, with the downstream cell division proteins, which are predominantly periplasmic. This chain is Cell division protein FtsB, found in Psychromonas ingrahamii (strain DSM 17664 / CCUG 51855 / 37).